A 101-amino-acid polypeptide reads, in one-letter code: Phosphoprotein OPG062 (101 aa).

Positions 51 to 73 (PSSPACERRPSSPSRCERMNNPG) are disordered. 2 positions are modified to phosphoserine: serine 53 and serine 62. Residues 56–68 (CERRPSSPSRCER) show a composition bias toward basic and acidic residues.

This sequence belongs to the orthopoxvirus OPG062 family. In terms of assembly, self-associates to form high molecular-weight forms. Interacts with protein OPG157. Interacts with host RICTOR and RPTOR; these interactions disrupt the mTORC1 and mTORC2 crosstalk. Post-translationally, phosphorylated on two serines. While these phosphorylations do not play a role in virion assembly; they are essential for the interaction with host RICTOR and RPTOR.

The protein resides in the virion. Functionally, plays an essential role in virion assembly and morphogenesis. Also plays a role in the inhibition of host immune response by dysregulating mTOR. Sequesters host RICTOR and RPTOR, thereby disrupting mTORC1 and mTORC2 crosstalk. In turn, blocks the host antiviral response in part through mTOR-dependent degradation of cGAS, the primary poxvirus sensor. This chain is Phosphoprotein OPG062 (OPG062), found in Homo sapiens (Human).